Here is a 363-residue protein sequence, read N- to C-terminus: Zinc finger CCCH domain-containing protein 53 (363 aa).

The C3H1-type zinc finger occupies 154-181 (KNRPKICSFYTIGQCKRGAECSFRHEMP). An RRM domain is found at 225–310 (KTLYVGGLNS…PPNEYSHYPS (86 aa)). The disordered stretch occupies residues 281-348 (LISQQQNQHS…SYSYPMPPHQ (68 aa)). Residues 283 to 297 (SQQQNQHSQMQQYYM) are compositionally biased toward low complexity. The span at 320-336 (FSTQESDGSSTSENNRA) shows a compositional bias: polar residues.

This Arabidopsis thaliana (Mouse-ear cress) protein is Zinc finger CCCH domain-containing protein 53.